We begin with the raw amino-acid sequence, 77 residues long: U8-lycotoxin-Ls1u (77 aa).

The signal sequence occupies residues 1–20 (MKLIIFTGLVLFAIVSLIEA). Positions 21-26 (QAENEK) are excised as a propeptide.

It belongs to the neurotoxin 19 (CSTX) family. 08 (U8-Lctx) subfamily. Contains 4 disulfide bonds. Expressed by the venom gland.

The protein resides in the secreted. This Lycosa singoriensis (Wolf spider) protein is U8-lycotoxin-Ls1u.